The following is a 185-amino-acid chain: Hypoxanthine/guanine phosphoribosyltransferase (185 aa).

Belongs to the purine/pyrimidine phosphoribosyltransferase family. Archaeal HPRT subfamily. In terms of assembly, homodimer.

Its subcellular location is the cytoplasm. The catalysed reaction is IMP + diphosphate = hypoxanthine + 5-phospho-alpha-D-ribose 1-diphosphate. The enzyme catalyses GMP + diphosphate = guanine + 5-phospho-alpha-D-ribose 1-diphosphate. The protein operates within purine metabolism; IMP biosynthesis via salvage pathway; IMP from hypoxanthine: step 1/1. Catalyzes a salvage reaction resulting in the formation of IMP that is energically less costly than de novo synthesis. This Methanococcus maripaludis (strain C7 / ATCC BAA-1331) protein is Hypoxanthine/guanine phosphoribosyltransferase.